The sequence spans 290 residues: Cilia- and flagella-associated protein 298 (290 aa).

Y264 carries the post-translational modification Phosphotyrosine.

It belongs to the CFAP298 family. As to quaternary structure, interacts with ZMYND10.

It is found in the cytoplasm. It localises to the cytoskeleton. The protein resides in the cilium basal body. In terms of biological role, plays a role in motile cilium function, possibly by acting on outer dynein arm assembly. Seems to be important for initiation rather than maintenance of cilium motility. Required for correct positioning of the cilium at the apical cell surface, suggesting an additional role in the planar cell polarity (PCP) pathway. May suppress canonical Wnt signaling activity. The chain is Cilia- and flagella-associated protein 298 from Homo sapiens (Human).